The following is a 504-amino-acid chain: Arabinose import ATP-binding protein AraG (504 aa).

ABC transporter domains lie at 8 to 243 and 256 to 499; these read LSFR…MVGR and YGEE…MPKV. 40 to 47 is an ATP binding site; sequence GENGAGKS.

This sequence belongs to the ABC transporter superfamily. Arabinose importer (TC 3.A.1.2.2) family. As to quaternary structure, the complex is composed of two ATP-binding proteins (AraG), two transmembrane proteins (AraH) and a solute-binding protein (AraF).

It is found in the cell inner membrane. It carries out the reaction L-arabinose(out) + ATP + H2O = L-arabinose(in) + ADP + phosphate + H(+). Its function is as follows. Part of the ABC transporter complex AraFGH involved in arabinose import. Responsible for energy coupling to the transport system. In Shigella dysenteriae serotype 1 (strain Sd197), this protein is Arabinose import ATP-binding protein AraG.